The sequence spans 59 residues: UPF0181 protein YoaH (59 aa).

This sequence belongs to the UPF0181 family.

This Shigella flexneri serotype 5b (strain 8401) protein is UPF0181 protein YoaH.